The sequence spans 230 residues: Urease accessory protein UreG (230 aa).

Position 33-40 (33-40) interacts with GTP; that stretch reads GPVGSGKT.

The protein belongs to the SIMIBI class G3E GTPase family. UreG subfamily. As to quaternary structure, homodimer. UreD, UreF and UreG form a complex that acts as a GTP-hydrolysis-dependent molecular chaperone, activating the urease apoprotein by helping to assemble the nickel containing metallocenter of UreC. The UreE protein probably delivers the nickel.

Its subcellular location is the cytoplasm. Facilitates the functional incorporation of the urease nickel metallocenter. This process requires GTP hydrolysis, probably effectuated by UreG. The polypeptide is Urease accessory protein UreG (Mycobacteroides abscessus (strain ATCC 19977 / DSM 44196 / CCUG 20993 / CIP 104536 / JCM 13569 / NCTC 13031 / TMC 1543 / L948) (Mycobacterium abscessus)).